Reading from the N-terminus, the 967-residue chain is Sulfite dehydrogenase subunit A (967 aa).

The 4Fe-4S Mo/W bis-MGD-type domain occupies 15 to 71; that stretch reads VEVKETTCYMCACRCGIRVHLRDGEVRYIDGNPNHPLNKGVICAKGSSGIMKQYSPG. [4Fe-4S] cluster-binding residues include Cys22, Cys25, Cys29, and Cys57.

The protein belongs to the prokaryotic molybdopterin-containing oxidoreductase family. In terms of assembly, forms a heterotrimeric membrane-bound complex composed of a catalytic heterodimer (SoeAB) and a membrane anchor protein (SoeC). [4Fe-4S] cluster is required as a cofactor. The cofactor is Mo-bis(molybdopterin guanine dinucleotide).

It is found in the cell inner membrane. It catalyses the reaction a quinone + sulfite + H2O = a quinol + sulfate. The enzyme catalyses a menaquinone + sulfite + H2O = a menaquinol + sulfate. Functionally, part of the SoeABC complex that catalyzes the oxidation of sulfite to sulfate. The sequence is that of Sulfite dehydrogenase subunit A from Allochromatium vinosum (strain ATCC 17899 / DSM 180 / NBRC 103801 / NCIMB 10441 / D) (Chromatium vinosum).